The sequence spans 258 residues: Tryptophan synthase alpha chain (258 aa).

Residues Glu47 and Asp58 each act as proton acceptor in the active site.

This sequence belongs to the TrpA family. As to quaternary structure, tetramer of two alpha and two beta chains.

The enzyme catalyses (1S,2R)-1-C-(indol-3-yl)glycerol 3-phosphate + L-serine = D-glyceraldehyde 3-phosphate + L-tryptophan + H2O. Its pathway is amino-acid biosynthesis; L-tryptophan biosynthesis; L-tryptophan from chorismate: step 5/5. The alpha subunit is responsible for the aldol cleavage of indoleglycerol phosphate to indole and glyceraldehyde 3-phosphate. In Bacillus cereus (strain ATCC 10987 / NRS 248), this protein is Tryptophan synthase alpha chain.